The primary structure comprises 191 residues: Surfactant protein C (191 aa).

Positions 1–23 (MDVGSKEVLMESPPDYSAAPRGR) are excised as a propeptide. Residues Cys-28 and Cys-29 are each lipidated (S-palmitoyl cysteine). The propeptide occupies 59–191 (HMSQKHTEMV…LCGEVPLYYI (133 aa)). Residues 94-191 (FSFGSTGLVV…LCGEVPLYYI (98 aa)) enclose the BRICHOS domain. Cysteines 121 and 183 form a disulfide.

The protein resides in the secreted. Its subcellular location is the extracellular space. It localises to the surface film. Functionally, pulmonary surfactant associated proteins promote alveolar stability by lowering the surface tension at the air-liquid interface in the peripheral air spaces. In Macaca mulatta (Rhesus macaque), this protein is Surfactant protein C (SFTPC).